The following is a 156-amino-acid chain: Small ribosomal subunit protein bS16 (156 aa).

Residues 124 to 135 show a composition bias toward low complexity; sequence AAKAAEAETPAE. The segment at 124–156 is disordered; it reads AAKAAEAETPAEVQHDDEKVELADVEESAPESV. The segment covering 136-145 has biased composition (basic and acidic residues); the sequence is VQHDDEKVEL. The span at 146–156 shows a compositional bias: acidic residues; that stretch reads ADVEESAPESV.

This sequence belongs to the bacterial ribosomal protein bS16 family.

This is Small ribosomal subunit protein bS16 from Bifidobacterium animalis subsp. lactis (strain AD011).